A 208-amino-acid polypeptide reads, in one-letter code: Ribosomal RNA large subunit methyltransferase E (208 aa).

5 residues coordinate S-adenosyl-L-methionine: Gly62, Trp64, Asp82, Asp98, and Asp123. Lys163 serves as the catalytic Proton acceptor.

It belongs to the class I-like SAM-binding methyltransferase superfamily. RNA methyltransferase RlmE family.

It is found in the cytoplasm. The catalysed reaction is uridine(2552) in 23S rRNA + S-adenosyl-L-methionine = 2'-O-methyluridine(2552) in 23S rRNA + S-adenosyl-L-homocysteine + H(+). Specifically methylates the uridine in position 2552 of 23S rRNA at the 2'-O position of the ribose in the fully assembled 50S ribosomal subunit. This is Ribosomal RNA large subunit methyltransferase E from Mannheimia succiniciproducens (strain KCTC 0769BP / MBEL55E).